The following is a 27-amino-acid chain: Cupiennin-3c (27 aa).

As to expression, expressed by the venom gland.

The protein localises to the secreted. The polypeptide is Cupiennin-3c (Cupiennius salei (American wandering spider)).